Here is a 180-residue protein sequence, read N- to C-terminus: Shikimate kinase (180 aa).

An ATP-binding site is contributed by 14–19 (GAGKTC). Position 18 (Thr18) interacts with Mg(2+). Residues Asp36, Arg60, and Gly82 each coordinate substrate. Position 120 (Arg120) interacts with ATP. Residue Arg139 coordinates substrate.

Belongs to the shikimate kinase family. As to quaternary structure, monomer. Requires Mg(2+) as cofactor.

It is found in the cytoplasm. It catalyses the reaction shikimate + ATP = 3-phosphoshikimate + ADP + H(+). It participates in metabolic intermediate biosynthesis; chorismate biosynthesis; chorismate from D-erythrose 4-phosphate and phosphoenolpyruvate: step 5/7. Its function is as follows. Catalyzes the specific phosphorylation of the 3-hydroxyl group of shikimic acid using ATP as a cosubstrate. In Stenotrophomonas maltophilia (strain K279a), this protein is Shikimate kinase.